The primary structure comprises 507 residues: MTNAKILVAHISESDADEAIRKIKKVNEKSGPFDLIIIFSNSYDENFELNTDGLPQLILLSCDKANNSKSKKINENVTLLHNMGTYKLANGITLSYFIYPDDTLQGEKKSILDEFGKSEDQVDILLTKEWGLSISERCGRLSGSEVVDELAKKLQARYHFAFSDEINFYELEPFQWERERLSRFLNIPKYGSGKKWAYAFNMPIGDNELKDEPEPPNLIANPYNSVVTNSNKRPLETETENSFDGDKQVLANREKNENKKIRTILPSSCHFCFSNPNLEDHMIISIGKLVYLTTAKGPLSVPKGDMDISGHCLIIPIEHIPKLDPSKNAELTQSILAYEASLVKMNYIKFDMCTIVFEIQSERSIHFHKQVIPVPKYLVLKFCSALDRQVHFNNEKFTRNAKLEFQCYDSHSSKQYVDVINNQSNNYLQFTVYETPEADPKIYLATFNASETIDLQFGRRVLAFLLNLPRRVKWNSSTCLQTKQQETIEAEKFQKAYRTYDISLTEN.

Ser242 is modified (phosphoserine).

Belongs to the CWF19 family. In terms of assembly, interacts with DBR1. Interacts with SYF1, a component of the NTC complex. Interacts with lariat-introns and lariat-intermediates.

The protein localises to the nucleus. It is found in the cytoplasm. In terms of biological role, involved in branched RNA metabolism, modulating the turnover of lariat-intron pre-mRNAs by the lariat-debranching enzyme DBR1. Enhances the debranching activity of DBR1 in vitro. This is CWF19-like protein DRN1 (DRN1) from Saccharomyces cerevisiae (strain ATCC 204508 / S288c) (Baker's yeast).